Consider the following 208-residue polypeptide: Uracil phosphoribosyltransferase (208 aa).

Residues R78, R103, and 130–138 each bind 5-phospho-alpha-D-ribose 1-diphosphate; that span reads DPMLATGGS. Residues I193 and 198-200 contribute to the uracil site; that span reads GDA. D199 provides a ligand contact to 5-phospho-alpha-D-ribose 1-diphosphate.

This sequence belongs to the UPRTase family. Mg(2+) serves as cofactor.

The catalysed reaction is UMP + diphosphate = 5-phospho-alpha-D-ribose 1-diphosphate + uracil. Its pathway is pyrimidine metabolism; UMP biosynthesis via salvage pathway; UMP from uracil: step 1/1. Its activity is regulated as follows. Allosterically activated by GTP. In terms of biological role, catalyzes the conversion of uracil and 5-phospho-alpha-D-ribose 1-diphosphate (PRPP) to UMP and diphosphate. The protein is Uracil phosphoribosyltransferase of Salmonella agona (strain SL483).